Consider the following 928-residue polypeptide: Kinesin heavy chain (928 aa).

Residues 7–330 enclose the Kinesin motor domain; the sequence is SIKVVARFRP…LRFGMRAKSI (324 aa). ATP contacts are provided by residues 88–95 and 238–245; these read GQTGAGKS and GSEKVGKT. Residues 343–866 are a coiled coil; the sequence is AELKQMLAKA…VKDRLEAAKA (524 aa). A compositionally biased stretch (low complexity) spans 395-409; it reads SKSASTTARPSTPSR. 2 disordered regions span residues 395–434 and 893–928; these read SKSASTTARPSTPSRLLPESRAETPAISDRAGTPSLPLDK and GGGDAVAGATATNPTIATLQQNPPENKRSSWFFQKS. Residues 905–928 show a composition bias toward polar residues; that stretch reads NPTIATLQQNPPENKRSSWFFQKS.

Belongs to the TRAFAC class myosin-kinesin ATPase superfamily. Kinesin family. Kinesin subfamily.

It is found in the cytoplasm. Its subcellular location is the cytoskeleton. Kinesin is a microtubule-associated force-producing protein that may play a role in organelle transport. Its motor activity is directed toward the microtubule's plus end. This is Kinesin heavy chain (kin) from Neurospora crassa (strain ATCC 24698 / 74-OR23-1A / CBS 708.71 / DSM 1257 / FGSC 987).